Here is a 136-residue protein sequence, read N- to C-terminus: uncharacterized protein (136 aa).

It localises to the mitochondrion. This is an uncharacterized protein from Marchantia polymorpha (Common liverwort).